Reading from the N-terminus, the 159-residue chain is MEQSHQNLQSQFFIEHILQILPHRYPMLLIDRVVELEANRKIVAYKNITFNEDVFNGHFPNKPIFPGVLIVEGMAQTGGFLAFTSLWGFDPEIAKTKIVYFMTIDKVKFRIPVTPGDRLEYHLEVLKHKGMIWQVGGTAQVDGKVVAEAELKAMIAERE.

His-58 is an active-site residue.

This sequence belongs to the thioester dehydratase family. FabZ subfamily.

It is found in the cytoplasm. It carries out the reaction a (3R)-hydroxyacyl-[ACP] = a (2E)-enoyl-[ACP] + H2O. Involved in unsaturated fatty acids biosynthesis. Catalyzes the dehydration of short chain beta-hydroxyacyl-ACPs and long chain saturated and unsaturated beta-hydroxyacyl-ACPs. The sequence is that of 3-hydroxyacyl-[acyl-carrier-protein] dehydratase FabZ from Helicobacter pylori (strain G27).